The sequence spans 205 residues: Thymidine kinase (205 aa).

ATP is bound by residues 9 to 16 (SAMNAGKS) and 87 to 90 (DECQ). The active-site Proton acceptor is the Glu88. Zn(2+)-binding residues include Cys145, Cys147, Cys182, and His185.

This sequence belongs to the thymidine kinase family. In terms of assembly, homotetramer.

Its subcellular location is the cytoplasm. The enzyme catalyses thymidine + ATP = dTMP + ADP + H(+). This chain is Thymidine kinase, found in Shigella dysenteriae serotype 1 (strain Sd197).